Reading from the N-terminus, the 448-residue chain is MKLEIIAIGGYEEVGRNMTAVNVDGEIIILDMGIRLDRVLIHEDTDISKLHSLELIEKGIIPNDTVMKNIEGEVKAIVLSHGHLDHIGAVPKLAHRYNAPIIGTPYTIELVKREILSEKKFDVRNPLIVLNAGESIDLTPNITLEFIRITHSIPDSVLPVLHTPYGSIVYGNDFKFDNFPVVGERPDYRAIKKVGKNGVLCFISETTRINHEGKTPPEIIASGLLKNDLLAADNDKHGIIVTTFSSHIARIKSITDIAEKMGRTPVLLGRSMMRFCGIAQDIGLVKFPEDLRIYGDPSSIEMALKNIVKEGKEKYLIIATGHQGEEGAVLSRMATNKTPYKFEKYDCVVFSADPIPNPMNAAQRYMLESRLKLLGVRIFKGAHVSGHAAKEDHRDMLRWLNPEHIIPSHGDFNLTAEYTKLAEEEGYRLGEDVHLLRNGQCLSFERII.

Zn(2+) is bound by residues H81, H83, D85, H86, H151, and D173. 383-387 (HVSGH) contacts substrate. Residue H409 coordinates Zn(2+).

It belongs to the metallo-beta-lactamase superfamily. RNA-metabolizing metallo-beta-lactamase-like family. Archaeal RNase J subfamily. Forms homodimers on heating to 60 degrees Celsius which may be the active form. Zn(2+) is required as a cofactor.

The protein resides in the cytoplasm. Its activity is regulated as follows. Inhibited by imidazole. Functionally, a 5'-3' exoribonuclease with a strong reference for 5'-monophosphorylated RNA and no endoribonuclease activty. Also has robust 5'-'3 nuclease activity on single-stranded DNA (exodeoxyribonuclease, exoDNase). May be involved in RNA degradation. The sequence is that of Ribonuclease J from Methanocaldococcus jannaschii (strain ATCC 43067 / DSM 2661 / JAL-1 / JCM 10045 / NBRC 100440) (Methanococcus jannaschii).